The chain runs to 532 residues: Probable cytochrome P450 524A1 (532 aa).

Residues 8–28 (FIIFILLAALAVFVSEATSKV) traverse the membrane as a helical segment. Cysteine 478 is a binding site for heme.

The protein belongs to the cytochrome P450 family. The cofactor is heme.

It is found in the membrane. The polypeptide is Probable cytochrome P450 524A1 (cyp524A1) (Dictyostelium discoideum (Social amoeba)).